The sequence spans 131 residues: Protein Bouncer (131 aa).

Positions methionine 1 to cysteine 26 are cleaved as a signal peptide. Cystine bridges form between cysteine 31-cysteine 56, cysteine 50-cysteine 74, cysteine 80-cysteine 99, and cysteine 100-cysteine 105. One can recognise a UPAR/Ly6 domain in the interval cysteine 31 to asparagine 106. Asparagine 65 is a glycosylation site (N-linked (GlcNAc...) asparagine). Asparagine 106 is lipidated: GPI-anchor amidated asparagine. A propeptide spans arginine 107–threonine 131 (removed in mature form).

It belongs to the SPACA4/bouncer family. Interacts with spermatocyte complex composed of izumo1, spaca6 and tmem81. As to expression, expressed in oocytes. Not expressed in testis.

It localises to the cell membrane. Oocyte-expressed fertilization factor that mediates sperm-egg binding and is essential for sperm entry into the egg. Necessary and sufficient to mediate species-specific gamete recognition and fertilization, which is essential for vertebrate species performing external fertilization. External fertilization cannot guarantee that only conspecific sperm reaches the egg by precopulatory mate choice: proteins such as Bouncer can therefore support the selection of conspecific sperm. The protein is Protein Bouncer of Oryzias latipes (Japanese rice fish).